A 124-amino-acid polypeptide reads, in one-letter code: Ribonuclease pancreatic (124 aa).

The segment covering 1–13 (KETAAAKFERQHM) has biased composition (basic and acidic residues). A disordered region spans residues 1–25 (KETAAAKFERQHMDSSTSSASSSNY). Positions 7 and 10 each coordinate substrate. Catalysis depends on histidine 12, which acts as the Proton acceptor. Intrachain disulfides connect cysteine 26-cysteine 84, cysteine 40-cysteine 95, cysteine 58-cysteine 110, and cysteine 65-cysteine 72. Substrate-binding positions include 41 to 45 (KPVNT), lysine 66, and arginine 85. Catalysis depends on histidine 119, which acts as the Proton donor.

The protein belongs to the pancreatic ribonuclease family. In terms of assembly, monomer. Interacts with and forms tight 1:1 complexes with RNH1. Dimerization of two such complexes may occur. Interaction with RNH1 inhibits this protein. In terms of tissue distribution, pancreas.

It localises to the secreted. It carries out the reaction an [RNA] containing cytidine + H2O = an [RNA]-3'-cytidine-3'-phosphate + a 5'-hydroxy-ribonucleotide-3'-[RNA].. The enzyme catalyses an [RNA] containing uridine + H2O = an [RNA]-3'-uridine-3'-phosphate + a 5'-hydroxy-ribonucleotide-3'-[RNA].. Functionally, endonuclease that catalyzes the cleavage of RNA on the 3' side of pyrimidine nucleotides. Acts on single-stranded and double-stranded RNA. The polypeptide is Ribonuclease pancreatic (RNASE1) (Tragelaphus oryx (Eland)).